We begin with the raw amino-acid sequence, 365 residues long: Chorismate synthase (365 aa).

NADP(+)-binding residues include Arg48 and Arg54. FMN is bound by residues 125 to 127 (RSS), 238 to 239 (NA), Gly278, 293 to 297 (KPTSS), and Arg319.

This sequence belongs to the chorismate synthase family. As to quaternary structure, homotetramer. FMNH2 serves as cofactor.

It catalyses the reaction 5-O-(1-carboxyvinyl)-3-phosphoshikimate = chorismate + phosphate. It participates in metabolic intermediate biosynthesis; chorismate biosynthesis; chorismate from D-erythrose 4-phosphate and phosphoenolpyruvate: step 7/7. Functionally, catalyzes the anti-1,4-elimination of the C-3 phosphate and the C-6 proR hydrogen from 5-enolpyruvylshikimate-3-phosphate (EPSP) to yield chorismate, which is the branch point compound that serves as the starting substrate for the three terminal pathways of aromatic amino acid biosynthesis. This reaction introduces a second double bond into the aromatic ring system. This chain is Chorismate synthase, found in Janthinobacterium sp. (strain Marseille) (Minibacterium massiliensis).